Consider the following 263-residue polypeptide: Exosome complex component Rrp4 (263 aa).

Residues 51-127 (GKYIPSRKDF…KAMKVELSMR (77 aa)) form the S1 motif domain. Residues 135–196 (SKGRIIEVVP…DRLTTAIEMI (62 aa)) form the KH domain. A disordered region spans residues 213 to 263 (LRGEPEGTEGSDEEQLVDEEVAGVSLEDDDVTEETSRKVDVLLDNDTDETN). Over residues 218–245 (EGTEGSDEEQLVDEEVAGVSLEDDDVTE) the composition is skewed to acidic residues.

The protein belongs to the RRP4 family. Component of the archaeal exosome complex. Forms a trimer of Rrp4 and/or Csl4 subunits. The trimer associates with a hexameric ring-like arrangement composed of 3 Rrp41-Rrp42 heterodimers.

The protein resides in the cytoplasm. In terms of biological role, non-catalytic component of the exosome, which is a complex involved in RNA degradation. Increases the RNA binding and the efficiency of RNA degradation. Confers strong poly(A) specificity to the exosome. The polypeptide is Exosome complex component Rrp4 (Methanococcoides burtonii (strain DSM 6242 / NBRC 107633 / OCM 468 / ACE-M)).